Here is an 86-residue protein sequence, read N- to C-terminus: uncharacterized protein (86 aa).

The chain crosses the membrane as a helical span at residues 4-24; sequence LFFTLIAFVAIILLMSIGFII.

It is found in the membrane. This is an uncharacterized protein from Haemophilus influenzae (strain ATCC 51907 / DSM 11121 / KW20 / Rd).